A 429-amino-acid polypeptide reads, in one-letter code: GTPase Obg (429 aa).

Positions M1–L158 constitute an Obg domain. A disordered region spans residues R124–P145. Residues A159–E329 form the OBG-type G domain. GTP is bound by residues G165–S172, F190–V194, D212–G215, N282–D285, and S310–V312. The Mg(2+) site is built by S172 and T192. One can recognise an OCT domain in the interval K351–D429.

Belongs to the TRAFAC class OBG-HflX-like GTPase superfamily. OBG GTPase family. Monomer. Mg(2+) is required as a cofactor.

Its subcellular location is the cytoplasm. An essential GTPase which binds GTP, GDP and possibly (p)ppGpp with moderate affinity, with high nucleotide exchange rates and a fairly low GTP hydrolysis rate. Plays a role in control of the cell cycle, stress response, ribosome biogenesis and in those bacteria that undergo differentiation, in morphogenesis control. The protein is GTPase Obg of Listeria innocua serovar 6a (strain ATCC BAA-680 / CLIP 11262).